Consider the following 318-residue polypeptide: tRNA pseudouridine synthase B (318 aa).

Asp47 functions as the Nucleophile in the catalytic mechanism.

The protein belongs to the pseudouridine synthase TruB family. Type 1 subfamily.

It catalyses the reaction uridine(55) in tRNA = pseudouridine(55) in tRNA. Functionally, responsible for synthesis of pseudouridine from uracil-55 in the psi GC loop of transfer RNAs. The polypeptide is tRNA pseudouridine synthase B (Aliivibrio salmonicida (strain LFI1238) (Vibrio salmonicida (strain LFI1238))).